Consider the following 321-residue polypeptide: Phospho-N-acetylmuramoyl-pentapeptide-transferase (321 aa).

A run of 10 helical transmembrane segments spans residues 6–26 (ALIP…LFIG), 50–70 (GTPT…GIWV), 82–102 (LFIL…DDFI), 118–138 (LLGQ…EGYP), 143–163 (FFGI…FWLV), 175–195 (IDGL…IIAW), 200–220 (YDVL…FAYN), 226–246 (IFMG…ISIM), 251–271 (WTLL…MLQV), and 301–321 (IDII…WFIW).

It belongs to the glycosyltransferase 4 family. MraY subfamily. Mg(2+) serves as cofactor.

Its subcellular location is the cell membrane. It carries out the reaction UDP-N-acetyl-alpha-D-muramoyl-L-alanyl-gamma-D-glutamyl-L-lysyl-D-alanyl-D-alanine + di-trans,octa-cis-undecaprenyl phosphate = Mur2Ac(oyl-L-Ala-gamma-D-Glu-L-Lys-D-Ala-D-Ala)-di-trans,octa-cis-undecaprenyl diphosphate + UMP. It participates in cell wall biogenesis; peptidoglycan biosynthesis. Functionally, catalyzes the initial step of the lipid cycle reactions in the biosynthesis of the cell wall peptidoglycan: transfers peptidoglycan precursor phospho-MurNAc-pentapeptide from UDP-MurNAc-pentapeptide onto the lipid carrier undecaprenyl phosphate, yielding undecaprenyl-pyrophosphoryl-MurNAc-pentapeptide, known as lipid I. The protein is Phospho-N-acetylmuramoyl-pentapeptide-transferase of Enterococcus hirae.